Consider the following 87-residue polypeptide: Small ribosomal subunit protein bS20 (87 aa).

Belongs to the bacterial ribosomal protein bS20 family.

In terms of biological role, binds directly to 16S ribosomal RNA. The sequence is that of Small ribosomal subunit protein bS20 from Corynebacterium diphtheriae (strain ATCC 700971 / NCTC 13129 / Biotype gravis).